Consider the following 226-residue polypeptide: Deoxyribose-phosphate aldolase (226 aa).

Aspartate 94 functions as the Proton donor/acceptor in the catalytic mechanism. Lysine 156 functions as the Schiff-base intermediate with acetaldehyde in the catalytic mechanism. Lysine 185 serves as the catalytic Proton donor/acceptor.

The protein belongs to the DeoC/FbaB aldolase family. DeoC type 1 subfamily.

It localises to the cytoplasm. It carries out the reaction 2-deoxy-D-ribose 5-phosphate = D-glyceraldehyde 3-phosphate + acetaldehyde. It participates in carbohydrate degradation; 2-deoxy-D-ribose 1-phosphate degradation; D-glyceraldehyde 3-phosphate and acetaldehyde from 2-deoxy-alpha-D-ribose 1-phosphate: step 2/2. Catalyzes a reversible aldol reaction between acetaldehyde and D-glyceraldehyde 3-phosphate to generate 2-deoxy-D-ribose 5-phosphate. This Burkholderia lata (strain ATCC 17760 / DSM 23089 / LMG 22485 / NCIMB 9086 / R18194 / 383) protein is Deoxyribose-phosphate aldolase.